The chain runs to 368 residues: E3 ubiquitin-protein ligase E3D (368 aa).

An N-acetylalanine modification is found at Ala-2. A BRAT1-like motif motif is present at residues 129–159; sequence PLPSENWSALVGEWCCHPDPFANRPLHPREN. Residue Cys-144 coordinates Zn(2+). An interaction with UBE2C region spans residues 214 to 236; the sequence is RPSEGSFPNIPRSQFLQSIIAQC. The HECT-like stretch occupies residues 332–368; that stretch reads LPSATCLELLLILSRNNASLPLSLRQMNSFQVAFLKM.

In terms of assembly, interacts with UBE2C/UbcH10 (E2 ubiquitin-conjugating enzyme). In vitro, interacts with cyclin-B. Post-translationally, ubiquitinated by UBCH10 (E2 ubiquitin-conjugating enzyme).

It is found in the cytoplasm. It carries out the reaction S-ubiquitinyl-[E2 ubiquitin-conjugating enzyme]-L-cysteine + [acceptor protein]-L-lysine = [E2 ubiquitin-conjugating enzyme]-L-cysteine + N(6)-ubiquitinyl-[acceptor protein]-L-lysine.. Its pathway is protein modification; protein ubiquitination. Its function is as follows. E3 ubiquitin-protein ligase which accepts ubiquitin from specific E2 ubiquitin-conjugating enzymes, and transfers it to substrates, generally promoting their degradation by the proteasome. Independently of its E3 ubiquitin-protein ligase activity, acts as an inhibitor of CPSF3 endonuclease activity by blocking CPSF3 active site. This Mus musculus (Mouse) protein is E3 ubiquitin-protein ligase E3D (Ube3d).